We begin with the raw amino-acid sequence, 26 residues long: Dermaseptin-J3 (26 aa).

The residue at position 26 (V26) is a Valine amide.

As to expression, expressed by the skin glands.

Its subcellular location is the secreted. Its function is as follows. Has antimicrobial activity. In Phasmahyla jandaia (Jandaia leaf frog), this protein is Dermaseptin-J3.